Consider the following 708-residue polypeptide: Leukotoxin translocation ATP-binding protein LktB (708 aa).

The Peptidase C39 domain occupies 1–126 (MEANHQRNDL…ACYQGQLILV (126 aa)). The 283-residue stretch at 155-437 (FLETLIVSIF…LAQLWQDFQQ (283 aa)) folds into the ABC transmembrane type-1 domain. 5 consecutive transmembrane segments (helical) span residues 159–179 (LIVS…FQVV), 192–212 (LNII…LSGL), 270–290 (ALTS…MWYY), 296–316 (LVIL…SPIL), and 389–409 (VMVI…LSIG). Residues 469–704 (ISFKNIRFRY…SNGLYSYLHQ (236 aa)) enclose the ABC transporter domain. Residue 503 to 510 (GRSGSGKS) coordinates ATP.

It belongs to the ABC transporter superfamily. Protein-1 exporter (TC 3.A.1.109) family. Homodimer.

It is found in the cell inner membrane. The enzyme catalyses ATP + H2O + proteinSide 1 = ADP + phosphate + proteinSide 2.. Part of the ABC transporter complex LktBD involved in leukotoxin export. Transmembrane domains (TMD) form a pore in the inner membrane and the ATP-binding domain (NBD) is responsible for energy generation. The chain is Leukotoxin translocation ATP-binding protein LktB (lktB) from Mannheimia haemolytica (Pasteurella haemolytica).